A 753-amino-acid polypeptide reads, in one-letter code: Probable tubulin--tyrosine ligase PBY1 (753 aa).

In terms of domain architecture, TTL spans 343 to 734 (MEYIYKPLTH…PIFNENRNKT (392 aa)).

It belongs to the tubulin--tyrosine ligase family. Requires Mg(2+) as cofactor. The cofactor is K(+).

Its subcellular location is the cytoplasm. The protein resides in the P-body. The catalysed reaction is C-terminal L-alpha-aminoacyl-L-glutamyl-L-glutamyl-[tubulin] + L-tyrosine + ATP = C-terminal L-alpha-aminoacyl-L-glutamyl-L-glutamyl-L-tyrosyl-[tubulin] + ADP + phosphate + H(+). Its function is as follows. Probable P-body-associated tubulin--tyrosine ligase. This chain is Probable tubulin--tyrosine ligase PBY1 (PBY1), found in Saccharomyces cerevisiae (strain ATCC 204508 / S288c) (Baker's yeast).